Here is a 2392-residue protein sequence, read N- to C-terminus: Protein Ycf2 (2392 aa).

ATP is bound at residue 1658 to 1665; it reads GPTEIGKS.

The protein belongs to the Ycf2 family.

It localises to the plastid. Its subcellular location is the chloroplast stroma. In terms of biological role, probable ATPase of unknown function. Its presence in a non-photosynthetic plant (Epifagus virginiana) and experiments in tobacco indicate that it has an essential function which is probably not related to photosynthesis. In Anthoceros angustus (Hornwort), this protein is Protein Ycf2.